The chain runs to 1557 residues: ABC transporter atnG (1557 aa).

The next 5 membrane-spanning stretches (helical) occupy residues 27–47, 70–90, 99–119, 131–151, and 159–179; these read FTLYFEEAFLSIFPAATLILA, LKLLLLAPYSISQLLLLAFWM, LTIASTVLRFIATLPCGYLIH, IISIYFLLTLLFDIPLARTIW, and VSAIFIAGTVVKALLLILETW. N-linked (GlcNAc...) asparagine glycans are attached at residues Asn-202 and Asn-249. The next 6 membrane-spanning stretches (helical) occupy residues 256-276, 311-331, 385-405, 412-432, 490-510, and 531-551; these read AGAMVVPIAKAFKWDLLAGVF, ATLLIGAYALVYGGIAIATAT, YIHDTWASLIEIGIALYLLYN, IAPIIIAFGCTVTAMKIAMMA, LLIAVVGLSNFNTLMTPIVSF, and LTSLTLFNLFAVFIGTLVESI. Residues 279 to 556 form the ABC transmembrane type-1 1 domain; sequence LCQSGFIISQ…LVESISETAM (278 aa). The 237-residue stretch at 593–829 folds into the ABC transporter 1 domain; it reads AFEVDVGWKN…LDYIQGFAIA (237 aa). An ATP-binding site is contributed by 625 to 632; the sequence is GAVGCGKT. Residue Asn-667 is glycosylated (N-linked (GlcNAc...) asparagine). Residues 882-902 traverse the membrane as a helical segment; that stretch reads LVYFGLMAIFVFLQAFPTVWV. An ABC transmembrane type-1 2 domain is found at 882–1162; it reads LVYFGLMAIF…LITDWTVLET (281 aa). N-linked (GlcNAc...) asparagine glycosylation is present at Asn-916. A run of 4 helical transmembrane segments spans residues 921–941, 996–1016, 1020–1040, and 1105–1125; these read IGVYWMFGVLGACFLLATACF, AVLQTCLALFLCVAQLIIIAV, YITATIPLCVLVYCIIGTFYM, and LSLVLDMTVAGFVLVLMGIAV. The N-linked (GlcNAc...) asparagine glycan is linked to Asn-1132. A helical membrane pass occupies residues 1135–1155; the sequence is SLGLALVNVVSLSASVKALIT. In terms of domain architecture, ABC transporter 2 spans 1199-1431; sequence VEYKNVSAFY…PSVFRELYKS (233 aa). N-linked (GlcNAc...) asparagine glycosylation is found at Asn-1203 and Asn-1218. 1233 to 1240 is an ATP binding site; that stretch reads GRSGSGKS. 2 disordered regions span residues 1439-1464 and 1503-1557; these read ERQERAEAEARRRERVEKERAEEELR and RTRS…RGLH. Over residues 1507 to 1522 the composition is skewed to basic and acidic residues; it reads RSRDHSAERRESKRYS.

This sequence belongs to the ABC transporter superfamily. ABCC family. Conjugate transporter (TC 3.A.1.208) subfamily.

It localises to the cell membrane. ABC transporter; part of the gene cluster that mediates the biosynthesis of aspercryptins, linear lipopeptides built from six amino acids including 2 highly unusual and nonproteogenic amino acids, 2-amino-octanoic acid (2aoa) and 2-amino-dodecanol (2adol). The sequence is that of ABC transporter atnG from Emericella nidulans (strain FGSC A4 / ATCC 38163 / CBS 112.46 / NRRL 194 / M139) (Aspergillus nidulans).